Consider the following 291-residue polypeptide: 4-hydroxy-tetrahydrodipicolinate synthase (291 aa).

Threonine 45 serves as a coordination point for pyruvate. Tyrosine 133 functions as the Proton donor/acceptor in the catalytic mechanism. The Schiff-base intermediate with substrate role is filled by lysine 161. Isoleucine 203 contacts pyruvate.

The protein belongs to the DapA family. In terms of assembly, homotetramer; dimer of dimers.

The protein resides in the cytoplasm. The catalysed reaction is L-aspartate 4-semialdehyde + pyruvate = (2S,4S)-4-hydroxy-2,3,4,5-tetrahydrodipicolinate + H2O + H(+). Its pathway is amino-acid biosynthesis; L-lysine biosynthesis via DAP pathway; (S)-tetrahydrodipicolinate from L-aspartate: step 3/4. Catalyzes the condensation of (S)-aspartate-beta-semialdehyde [(S)-ASA] and pyruvate to 4-hydroxy-tetrahydrodipicolinate (HTPA). This is 4-hydroxy-tetrahydrodipicolinate synthase from Neisseria gonorrhoeae (strain ATCC 700825 / FA 1090).